We begin with the raw amino-acid sequence, 248 residues long: MENFKGLQKSLYIWTDSADLDKRVEQLKAATGGDVALENVHRLSFSSYANSSFDLIVIECAQLTDSYVKLLHMLKPSGKLHLVSFIGPAASLLQEIKLSGFINCREDSPDALTAEKPGYETGSSARLSFAKKNANAVNVWKISGDDEELIDEEELLDEEDKQKPDPAGLRVCSTTGKRKACKNCSCGLAEELETEKQSQKATENAKSSCGNCYLGDAFRCSTCPYLGMPAFKPGEKVQLADNLLKSDI.

The N-terminal SAM-like domain stretch occupies residues 4 to 129; sequence FKGLQKSLYI…ETGSSARLSF (126 aa). Residues 130 to 161 form a linker region; that stretch reads AKKNANAVNVWKISGDDEELIDEEELLDEEDK. Residues cysteine 172, cysteine 181, cysteine 184, and cysteine 186 each coordinate [2Fe-2S] cluster. The tract at residues 172 to 186 is fe-S binding site A; the sequence is CSTTGKRKACKNCSC. 4 residues coordinate [4Fe-4S] cluster: cysteine 209, cysteine 212, cysteine 220, and cysteine 223. 2 short sequence motifs (cx2C motif) span residues 209–212 and 220–223; these read CGNC and CSTC. The segment at 209–223 is fe-S binding site B; the sequence is CGNCYLGDAFRCSTC.

This sequence belongs to the anamorsin family. As to quaternary structure, monomer. It depends on [2Fe-2S] cluster as a cofactor. Requires [4Fe-4S] cluster as cofactor.

It is found in the cytoplasm. Its subcellular location is the mitochondrion intermembrane space. Component of the cytosolic iron-sulfur (Fe-S) protein assembly (CIA) machinery. Required for the maturation of extramitochondrial Fe-S proteins. Part of an electron transfer chain functioning in an early step of cytosolic Fe-S biogenesis, facilitating the de novo assembly of a [4Fe-4S] cluster on the cytosolic Fe-S scaffold complex. Electrons are transferred from NADPH via a FAD- and FMN-containing diflavin oxidoreductase. Together with the diflavin oxidoreductase, also required for the assembly of the diferric tyrosyl radical cofactor of ribonucleotide reductase (RNR), probably by providing electrons for reduction during radical cofactor maturation in the catalytic small subunit. The protein is Anamorsin homolog of Drosophila simulans (Fruit fly).